An 84-amino-acid polypeptide reads, in one-letter code: Alpha-like toxin BmK M1 (84 aa).

A signal peptide spans 1–19 (MNYLVMISFALLLMTGVES). The 63-residue stretch at 21–83 (RDAYIAKPHN…VPIRVPGKCH (63 aa)) folds into the LCN-type CS-alpha/beta domain. 4 cysteine pairs are disulfide-bonded: cysteine 31-cysteine 82, cysteine 35-cysteine 55, cysteine 41-cysteine 65, and cysteine 45-cysteine 67. Position 84 (arginine 84) is a propeptide, removed by a carboxypeptidase.

This sequence belongs to the long (4 C-C) scorpion toxin superfamily. Sodium channel inhibitor family. Alpha subfamily. In terms of tissue distribution, expressed by the venom gland.

It is found in the secreted. Its function is as follows. Alpha toxins bind voltage-independently at site-3 of sodium channels (Nav) and inhibit the inactivation of the activated channels thereby blocking neuronal transmission. This toxin is active against both mammals and insects, and is classified as an alpha-like toxin. It is active on Nav1.2/SCN2A (EC(50)=139-252 nM), Nav1.3/SCN3A (EC(50)=565 nM), Nav1.4/SCN4A and Nav1.5/SCN5A (EC(50)=195-500 nM), Nav1.6/SCN8A (EC(50)=214 nM), and drosophila DmNav1 (EC(50)=30 nM). In mNav1.6/SCN8A, the toxin induces a large increase in both transient and persistent currents, which correlates with a prominent reduction in the fast component of inactivating current. In rNav1.2/SCN2A and rNav1.3/SCN3A, toxin-increased currents is much smaller. Moreover, the toxin only accelerates the slow inactivation development and delay recovery of mNav1.6/SCN8A through binding to the channel in the open state. Is 6-fold more toxic than BmK-M2. In vivo, intrahippocampal injection into rat induces epileptiform responses. In addition, intraplantar injection into rat induces spontaneous nociception and hyperalgesia. In Olivierus martensii (Manchurian scorpion), this protein is Alpha-like toxin BmK M1.